The sequence spans 426 residues: 3-phosphoshikimate 1-carboxyvinyltransferase (426 aa).

Positions 22, 23, and 27 each coordinate 3-phosphoshikimate. Lys-22 is a binding site for phosphoenolpyruvate. Gly-96 and Arg-124 together coordinate phosphoenolpyruvate. 3-phosphoshikimate contacts are provided by Ser-170, Ser-171, Gln-172, Ser-198, Asp-314, Asn-337, and Lys-341. Gln-172 provides a ligand contact to phosphoenolpyruvate. The Proton acceptor role is filled by Asp-314. Arg-345, Arg-387, and Lys-412 together coordinate phosphoenolpyruvate.

This sequence belongs to the EPSP synthase family. As to quaternary structure, monomer.

It is found in the cytoplasm. It catalyses the reaction 3-phosphoshikimate + phosphoenolpyruvate = 5-O-(1-carboxyvinyl)-3-phosphoshikimate + phosphate. Its pathway is metabolic intermediate biosynthesis; chorismate biosynthesis; chorismate from D-erythrose 4-phosphate and phosphoenolpyruvate: step 6/7. Catalyzes the transfer of the enolpyruvyl moiety of phosphoenolpyruvate (PEP) to the 5-hydroxyl of shikimate-3-phosphate (S3P) to produce enolpyruvyl shikimate-3-phosphate and inorganic phosphate. The chain is 3-phosphoshikimate 1-carboxyvinyltransferase from Shewanella baltica (strain OS185).